A 476-amino-acid chain; its full sequence is Membrane-bound lytic murein transglycosylase F (476 aa).

An N-terminal signal peptide occupies residues methionine 1–alanine 16. Residues cysteine 17 to valine 259 are non-LT domain. An LT domain region spans residues lysine 260–glutamine 476. The active site involves glutamate 304.

It in the N-terminal section; belongs to the bacterial solute-binding protein 3 family. In the C-terminal section; belongs to the transglycosylase Slt family.

Its subcellular location is the cell outer membrane. It carries out the reaction Exolytic cleavage of the (1-&gt;4)-beta-glycosidic linkage between N-acetylmuramic acid (MurNAc) and N-acetylglucosamine (GlcNAc) residues in peptidoglycan, from either the reducing or the non-reducing ends of the peptidoglycan chains, with concomitant formation of a 1,6-anhydrobond in the MurNAc residue.. Murein-degrading enzyme that degrades murein glycan strands and insoluble, high-molecular weight murein sacculi, with the concomitant formation of a 1,6-anhydromuramoyl product. Lytic transglycosylases (LTs) play an integral role in the metabolism of the peptidoglycan (PG) sacculus. Their lytic action creates space within the PG sacculus to allow for its expansion as well as for the insertion of various structures such as secretion systems and flagella. The protein is Membrane-bound lytic murein transglycosylase F of Shewanella frigidimarina (strain NCIMB 400).